The sequence spans 327 residues: Cysteine synthase (327 aa).

N6-(pyridoxal phosphate)lysine is present on K65. Pyridoxal 5'-phosphate contacts are provided by residues N95, G200 to T204, and S282.

The protein belongs to the cysteine synthase/cystathionine beta-synthase family. Pyridoxal 5'-phosphate is required as a cofactor.

The catalysed reaction is O-acetyl-L-serine + hydrogen sulfide = L-cysteine + acetate. Its pathway is amino-acid biosynthesis; L-cysteine biosynthesis; L-cysteine from L-serine: step 2/2. In Aquifex aeolicus (strain VF5), this protein is Cysteine synthase (cysM).